The primary structure comprises 260 residues: Transcription repressor OFP13 (260 aa).

In terms of domain architecture, OVATE spans 150–211 (VAMESEDPYG…VSAFVDLLSG (62 aa)).

Expressed in roots, rosette and cauline leaves, shoots, stems, flower buds and siliques.

Its subcellular location is the nucleus. In terms of biological role, transcriptional repressor that regulates multiple aspects of plant growth and development through the regulation of BEL1-LIKE (BLH) and KNOX TALE (KNAT) homeodomain transcription factors. The sequence is that of Transcription repressor OFP13 (OFP13) from Arabidopsis thaliana (Mouse-ear cress).